A 471-amino-acid polypeptide reads, in one-letter code: Eukaryotic translation initiation factor 3 subunit L (471 aa).

A PCI domain is found at 252–446 (DAIRMFSHIL…DLDYAMQGDL (195 aa)).

This sequence belongs to the eIF-3 subunit L family.

It localises to the cytoplasm. Functionally, component of the eukaryotic translation initiation factor 3 (eIF-3) complex, which is involved in protein synthesis of a specialized repertoire of mRNAs and, together with other initiation factors, stimulates binding of mRNA and methionyl-tRNAi to the 40S ribosome. The eIF-3 complex specifically targets and initiates translation of a subset of mRNAs involved in cell proliferation. The chain is Eukaryotic translation initiation factor 3 subunit L from Pyricularia oryzae (strain Y34) (Rice blast fungus).